We begin with the raw amino-acid sequence, 289 residues long: ADP-polyphosphate phosphotransferase (289 aa).

This sequence belongs to the polyphosphate kinase 2 (PPK2) family. Class I subfamily.

The catalysed reaction is [phosphate](n) + ATP = [phosphate](n+1) + ADP. Uses inorganic polyphosphate (polyP) as a donor to convert ADP to ATP. The polypeptide is ADP-polyphosphate phosphotransferase (Rhodopseudomonas palustris (strain ATCC BAA-98 / CGA009)).